Consider the following 140-residue polypeptide: Large ribosomal subunit protein uL11 (140 aa).

This sequence belongs to the universal ribosomal protein uL11 family. In terms of assembly, part of the ribosomal stalk of the 50S ribosomal subunit. Interacts with L10 and the large rRNA to form the base of the stalk. L10 forms an elongated spine to which L12 dimers bind in a sequential fashion forming a multimeric L10(L12)X complex. In terms of processing, one or more lysine residues are methylated.

Its function is as follows. Forms part of the ribosomal stalk which helps the ribosome interact with GTP-bound translation factors. The chain is Large ribosomal subunit protein uL11 from Caldanaerobacter subterraneus subsp. tengcongensis (strain DSM 15242 / JCM 11007 / NBRC 100824 / MB4) (Thermoanaerobacter tengcongensis).